We begin with the raw amino-acid sequence, 113 residues long: Hydrogenase maturation factor HypA (113 aa).

His2 provides a ligand contact to Ni(2+). Residues Cys70, Cys73, Cys86, and Cys88 each contribute to the Zn(2+) site.

It belongs to the HypA/HybF family.

Functionally, involved in the maturation of [NiFe] hydrogenases. Required for nickel insertion into the metal center of the hydrogenase. This chain is Hydrogenase maturation factor HypA, found in Nostoc punctiforme (strain ATCC 29133 / PCC 73102).